A 515-amino-acid polypeptide reads, in one-letter code: 1-pyrroline-5-carboxylate dehydrogenase (515 aa).

Active-site residues include glutamate 286 and cysteine 320.

This sequence belongs to the aldehyde dehydrogenase family. RocA subfamily.

The catalysed reaction is L-glutamate 5-semialdehyde + NAD(+) + H2O = L-glutamate + NADH + 2 H(+). It functions in the pathway amino-acid degradation; L-proline degradation into L-glutamate; L-glutamate from L-proline: step 2/2. The polypeptide is 1-pyrroline-5-carboxylate dehydrogenase (Bacillus cereus (strain B4264)).